The sequence spans 500 residues: Cholesterol 24-hydroxylase (500 aa).

Residues 3–23 traverse the membrane as a helical segment; it reads PGLLLLGSAVLLAFGLCCTFV. C437 serves as a coordination point for heme.

Belongs to the cytochrome P450 family. The cofactor is heme. In terms of tissue distribution, expressed in high level in the pyramidal cells of the hippocampus, Purkinje cells of the cerebellum, and neuronal cell bodies in layers II/III, V, and VI of the cortex. Expressed in hippocampal and cerebellar interneurons, in retinal ganglion cells, and in a subset of retinal cells localized to the inner nuclear layer (at protein level).

It is found in the endoplasmic reticulum membrane. The protein localises to the microsome membrane. Its subcellular location is the postsynapse. It localises to the presynapse. The protein resides in the cell projection. It is found in the dendrite. It carries out the reaction cholesterol + reduced [NADPH--hemoprotein reductase] + O2 = (24S)-hydroxycholesterol + oxidized [NADPH--hemoprotein reductase] + H2O + H(+). The enzyme catalyses cholestanol + reduced [NADPH--hemoprotein reductase] + O2 = (24S)-hydroxycholestanol + oxidized [NADPH--hemoprotein reductase] + H2O + H(+). It catalyses the reaction 7-dehydrocholesterol + reduced [NADPH--hemoprotein reductase] + O2 = cholesta-5,7-dien-3beta,24S-diol + oxidized [NADPH--hemoprotein reductase] + H2O + H(+). The catalysed reaction is 7-dehydrocholesterol + reduced [NADPH--hemoprotein reductase] + O2 = cholesta-5,7-dien-3beta,25-diol + oxidized [NADPH--hemoprotein reductase] + H2O + H(+). It carries out the reaction desmosterol + reduced [NADPH--hemoprotein reductase] + O2 = (24Z),26-hydroxydesmosterol + oxidized [NADPH--hemoprotein reductase] + H2O + H(+). The enzyme catalyses desmosterol + reduced [NADPH--hemoprotein reductase] + O2 = (24S)-25-epoxycholesterol + oxidized [NADPH--hemoprotein reductase] + H2O + H(+). It catalyses the reaction 4beta-hydroxycholesterol + reduced [NADPH--hemoprotein reductase] + O2 = 4beta,24S-dihydroxycholesterol + oxidized [NADPH--hemoprotein reductase] + H2O + H(+). The catalysed reaction is (24S)-hydroxycholesterol + reduced [NADPH--hemoprotein reductase] + O2 = (24S,25R)-24,26-dihydroxycholesterol + oxidized [NADPH--hemoprotein reductase] + H2O + H(+). It carries out the reaction (24S)-hydroxycholesterol + reduced [NADPH--hemoprotein reductase] + O2 = 24S,25-dihydroxycholesterol + oxidized [NADPH--hemoprotein reductase] + H2O + H(+). The enzyme catalyses 7alpha-hydroxycholesterol + reduced [NADPH--hemoprotein reductase] + O2 = (24S)-7alpha-dihydroxycholesterol + oxidized [NADPH--hemoprotein reductase] + H2O + H(+). It catalyses the reaction progesterone + reduced [NADPH--hemoprotein reductase] + O2 = 17alpha-hydroxyprogesterone + oxidized [NADPH--hemoprotein reductase] + H2O + H(+). The catalysed reaction is testosterone + reduced [NADPH--hemoprotein reductase] + O2 = 16beta,17beta-dihydroxyandrost-4-en-3-one + oxidized [NADPH--hemoprotein reductase] + H2O + H(+). It carries out the reaction testosterone + reduced [NADPH--hemoprotein reductase] + O2 = 2-hydroxytestosterone + oxidized [NADPH--hemoprotein reductase] + H2O + H(+). The enzyme catalyses testosterone + reduced [NADPH--hemoprotein reductase] + O2 = 6beta,17beta-dihydroxyandrost-4-en-3-one + oxidized [NADPH--hemoprotein reductase] + H2O + H(+). Its pathway is steroid metabolism; cholesterol degradation. It functions in the pathway lipid metabolism; C21-steroid hormone metabolism. P450 monooxygenase that plays a major role in cholesterol homeostasis in the brain. Primarily catalyzes the hydroxylation (with S stereochemistry) at C-24 of cholesterol side chain, triggering cholesterol diffusion out of neurons and its further degradation. By promoting constant cholesterol elimination in neurons, may activate the mevalonate pathway and coordinate the synthesis of new cholesterol and nonsterol isoprenoids involved in synaptic activity and learning. Further hydroxylates cholesterol derivatives and hormone steroids on both the ring and side chain of these molecules, converting them into active oxysterols involved in lipid signaling and biosynthesis. Acts as an epoxidase converting cholesta-5,24-dien-3beta-ol/desmosterol into (24S),25-epoxycholesterol, an abundant lipid ligand of nuclear NR1H2 and NR1H3 receptors shown to promote neurogenesis in developing brain. May also catalyze the oxidative metabolism of xenobiotics, such as clotrimazole. In Mus musculus (Mouse), this protein is Cholesterol 24-hydroxylase.